Reading from the N-terminus, the 424-residue chain is Serine--tRNA ligase (424 aa).

Position 230 to 232 (230 to 232 (TAE)) interacts with L-serine. Position 261–263 (261–263 (RSE)) interacts with ATP. Position 284 (Glu284) interacts with L-serine. Residue 348–351 (EISS) coordinates ATP. Ser384 provides a ligand contact to L-serine.

The protein belongs to the class-II aminoacyl-tRNA synthetase family. Type-1 seryl-tRNA synthetase subfamily. Homodimer. The tRNA molecule binds across the dimer.

Its subcellular location is the cytoplasm. It carries out the reaction tRNA(Ser) + L-serine + ATP = L-seryl-tRNA(Ser) + AMP + diphosphate + H(+). The catalysed reaction is tRNA(Sec) + L-serine + ATP = L-seryl-tRNA(Sec) + AMP + diphosphate + H(+). It participates in aminoacyl-tRNA biosynthesis; selenocysteinyl-tRNA(Sec) biosynthesis; L-seryl-tRNA(Sec) from L-serine and tRNA(Sec): step 1/1. Functionally, catalyzes the attachment of serine to tRNA(Ser). Is also able to aminoacylate tRNA(Sec) with serine, to form the misacylated tRNA L-seryl-tRNA(Sec), which will be further converted into selenocysteinyl-tRNA(Sec). The chain is Serine--tRNA ligase from Nitratidesulfovibrio vulgaris (strain ATCC 29579 / DSM 644 / CCUG 34227 / NCIMB 8303 / VKM B-1760 / Hildenborough) (Desulfovibrio vulgaris).